Here is a 199-residue protein sequence, read N- to C-terminus: 7-methyl-GTP pyrophosphatase (199 aa).

Asp-76 serves as the catalytic Proton acceptor.

It belongs to the Maf family. YceF subfamily. It depends on a divalent metal cation as a cofactor.

Its subcellular location is the cytoplasm. It carries out the reaction N(7)-methyl-GTP + H2O = N(7)-methyl-GMP + diphosphate + H(+). In terms of biological role, nucleoside triphosphate pyrophosphatase that hydrolyzes 7-methyl-GTP (m(7)GTP). May have a dual role in cell division arrest and in preventing the incorporation of modified nucleotides into cellular nucleic acids. The sequence is that of 7-methyl-GTP pyrophosphatase from Brucella abortus biovar 1 (strain 9-941).